The chain runs to 160 residues: Globin CTT-II beta (160 aa).

The signal sequence occupies residues 1–15 (MKFLVLALCIAAAVA). A Globin domain is found at 17 to 160 (PLSADEASLV…NVFNMMFSYL (144 aa)). Heme b is bound by residues His-75 and His-110.

The protein belongs to the globin family. Homodimer.

The chain is Globin CTT-II beta from Chironomus thummi thummi (Midge).